Here is a 464-residue protein sequence, read N- to C-terminus: Fumarate hydratase class II (464 aa).

Residues 96–98, 127–130, 137–139, and Thr185 contribute to the substrate site; these read SGT, HPND, and SSN. The active-site Proton donor/acceptor is His186. Ser316 is a catalytic residue. Substrate-binding positions include Ser317 and 322-324; that span reads KVN.

Belongs to the class-II fumarase/aspartase family. Fumarase subfamily. Homotetramer.

It is found in the cytoplasm. The catalysed reaction is (S)-malate = fumarate + H2O. It participates in carbohydrate metabolism; tricarboxylic acid cycle; (S)-malate from fumarate: step 1/1. In terms of biological role, involved in the TCA cycle. Catalyzes the stereospecific interconversion of fumarate to L-malate. In Pseudomonas syringae pv. tomato (strain ATCC BAA-871 / DC3000), this protein is Fumarate hydratase class II.